The primary structure comprises 356 residues: UDP-N-acetylglucosamine--N-acetylmuramyl-(pentapeptide) pyrophosphoryl-undecaprenol N-acetylglucosamine transferase (356 aa).

UDP-N-acetyl-alpha-D-glucosamine-binding positions include 15-17, asparagine 127, arginine 163, serine 191, isoleucine 244, 263-268, and glutamine 288; these read TGG and ALTVSE.

Belongs to the glycosyltransferase 28 family. MurG subfamily.

It is found in the cell inner membrane. The catalysed reaction is di-trans,octa-cis-undecaprenyl diphospho-N-acetyl-alpha-D-muramoyl-L-alanyl-D-glutamyl-meso-2,6-diaminopimeloyl-D-alanyl-D-alanine + UDP-N-acetyl-alpha-D-glucosamine = di-trans,octa-cis-undecaprenyl diphospho-[N-acetyl-alpha-D-glucosaminyl-(1-&gt;4)]-N-acetyl-alpha-D-muramoyl-L-alanyl-D-glutamyl-meso-2,6-diaminopimeloyl-D-alanyl-D-alanine + UDP + H(+). Its pathway is cell wall biogenesis; peptidoglycan biosynthesis. In terms of biological role, cell wall formation. Catalyzes the transfer of a GlcNAc subunit on undecaprenyl-pyrophosphoryl-MurNAc-pentapeptide (lipid intermediate I) to form undecaprenyl-pyrophosphoryl-MurNAc-(pentapeptide)GlcNAc (lipid intermediate II). This chain is UDP-N-acetylglucosamine--N-acetylmuramyl-(pentapeptide) pyrophosphoryl-undecaprenol N-acetylglucosamine transferase, found in Yersinia pestis (strain Pestoides F).